Consider the following 659-residue polypeptide: DNA mismatch repair protein MutL (659 aa).

This sequence belongs to the DNA mismatch repair MutL/HexB family.

Functionally, this protein is involved in the repair of mismatches in DNA. It is required for dam-dependent methyl-directed DNA mismatch repair. May act as a 'molecular matchmaker', a protein that promotes the formation of a stable complex between two or more DNA-binding proteins in an ATP-dependent manner without itself being part of a final effector complex. The polypeptide is DNA mismatch repair protein MutL (Ligilactobacillus salivarius (strain UCC118) (Lactobacillus salivarius)).